A 303-amino-acid chain; its full sequence is Methionyl-tRNA formyltransferase (303 aa).

(6S)-5,6,7,8-tetrahydrofolate is bound at residue 108-111; it reads SDLP.

This sequence belongs to the Fmt family.

It carries out the reaction L-methionyl-tRNA(fMet) + (6R)-10-formyltetrahydrofolate = N-formyl-L-methionyl-tRNA(fMet) + (6S)-5,6,7,8-tetrahydrofolate + H(+). In terms of biological role, attaches a formyl group to the free amino group of methionyl-tRNA(fMet). The formyl group appears to play a dual role in the initiator identity of N-formylmethionyl-tRNA by promoting its recognition by IF2 and preventing the misappropriation of this tRNA by the elongation apparatus. This is Methionyl-tRNA formyltransferase from Rickettsia peacockii (strain Rustic).